The chain runs to 44 residues: Small, acid-soluble spore protein P (44 aa).

Residues 1 to 44 (MSQTMSKNNREAKEKKGQPEPLSGSHKVKNRNHSRQKHHAHHDM) are disordered. Positions 8–18 (NNREAKEKKGQ) are enriched in basic and acidic residues. The span at 26 to 44 (HKVKNRNHSRQKHHAHHDM) shows a compositional bias: basic residues.

The protein belongs to the SspP family.

It is found in the spore core. In Bacillus cereus (strain ATCC 10987 / NRS 248), this protein is Small, acid-soluble spore protein P.